A 249-amino-acid chain; its full sequence is Triosephosphate isomerase (249 aa).

12-14 (NWK) serves as a coordination point for substrate. The active-site Electrophile is the His96. Glu166 acts as the Proton acceptor in catalysis. Substrate-binding positions include Gly172, Ser211, and 232–233 (GG).

The protein belongs to the triosephosphate isomerase family. As to quaternary structure, homodimer.

Its subcellular location is the cytoplasm. It catalyses the reaction D-glyceraldehyde 3-phosphate = dihydroxyacetone phosphate. It functions in the pathway carbohydrate biosynthesis; gluconeogenesis. The protein operates within carbohydrate degradation; glycolysis; D-glyceraldehyde 3-phosphate from glycerone phosphate: step 1/1. Its function is as follows. Involved in the gluconeogenesis. Catalyzes stereospecifically the conversion of dihydroxyacetone phosphate (DHAP) to D-glyceraldehyde-3-phosphate (G3P). The protein is Triosephosphate isomerase of Xanthobacter flavus.